The primary structure comprises 204 residues: uncharacterized protein (204 aa).

A coiled-coil region spans residues 109-136; sequence QFDIDVHKDQIEKLKDLYKALLRIAETT.

This is an uncharacterized protein from Bacillus subtilis (strain 168).